The chain runs to 182 residues: Ribosome-recycling factor (182 aa).

Residues 136–156 are disordered; sequence IRKQEKNSDISKDESRDLQDK.

It belongs to the RRF family.

The protein localises to the cytoplasm. In terms of biological role, responsible for the release of ribosomes from messenger RNA at the termination of protein biosynthesis. May increase the efficiency of translation by recycling ribosomes from one round of translation to another. In Trichodesmium erythraeum (strain IMS101), this protein is Ribosome-recycling factor.